The primary structure comprises 148 residues: 3-hydroxyacyl-[acyl-carrier-protein] dehydratase FabZ (148 aa).

Histidine 49 is an active-site residue.

Belongs to the thioester dehydratase family. FabZ subfamily.

It localises to the cytoplasm. The enzyme catalyses a (3R)-hydroxyacyl-[ACP] = a (2E)-enoyl-[ACP] + H2O. Functionally, involved in unsaturated fatty acids biosynthesis. Catalyzes the dehydration of short chain beta-hydroxyacyl-ACPs and long chain saturated and unsaturated beta-hydroxyacyl-ACPs. The polypeptide is 3-hydroxyacyl-[acyl-carrier-protein] dehydratase FabZ (Ehrlichia canis (strain Jake)).